The primary structure comprises 207 residues: Ribonuclease HII (207 aa).

The region spanning 17–207 (RIVAGVDEVG…SFKPLAAFVD (191 aa)) is the RNase H type-2 domain. A divalent metal cation contacts are provided by D23, E24, and D120.

It belongs to the RNase HII family. Mn(2+) is required as a cofactor. Mg(2+) serves as cofactor.

The protein localises to the cytoplasm. It carries out the reaction Endonucleolytic cleavage to 5'-phosphomonoester.. Endonuclease that specifically degrades the RNA of RNA-DNA hybrids. The polypeptide is Ribonuclease HII (Herpetosiphon aurantiacus (strain ATCC 23779 / DSM 785 / 114-95)).